The following is a 2259-amino-acid chain: MFKKLKQKISEEQQQLQQALAPAQASSSSSTPTRTRSRTSSFTDQLDDATPNRELLAGMVAEPAFLSEYTIFALDPSKQPKTQTGSVSGDTQTFAQKLQLRVPSMESLFRSPIKESLFRSSKESLVRTSSRESLNQVDLDCAVATFDPPSDMESEAEDAPWSSDSLSREQLLQRLRRMERSLSSYRGKYSELVTAFQTLQREKKKLQGILSQSQDKSLRRISELREELQMDQQAKRHLQEEFDACVEEKDQYISVLQTQVSLLKQRLQNGPMSVDVPKPLPPVELQAEAHSDMEKLEEKLEEKLEEKLEEKLEGVGEAVGGGTSAKTLEMLQQRVKRQENLLQRCKETIGSHKEQCALLLSEKEALQEQLEERLQELEKMKELHMAEKTKLITQLRDAKNLIEQLEQDKGMVITEAKRQMLETLELKDDEIAQLRSHIQRMTTQGEELREQKEKSERAAFEELEKALSTAQKTEDAQRRMKVEMDEQIKAVERAGEEERLRLQHELSRVRQEAVSMAKKNSEQRADLQKLHAEQLASKEQELSQKLESRERELQEQMRMALEKSRSEYLKLTQEKEQQESLALEELELQKKAILTESENKLQGLRQEAEVHRTRIRELETSLEKSLQESRTQSERLAVHLEAEKSKHKTELTALAEKHRTELEGLQQQQHSLWTERLQNLSQQHQAAVEELREKHQQEKDALLKEKESLFQAHIQDMNEKTLEKLDKKQMELESVSSELSEALKARDQLAEELSVLRGDADQMKQALEAELQEQRRHHQREVDSISGQQEIIVRRTEKALKDEISQLGGLLKEKDEHLQERQAQVHNLEACLQKSAEELQQALAKLDLLQAQQSTTHAQTGAYEEQLAQMQQKVSDLETEKNLLTKQVVEVETQKKRVCVELDAQRAQVQQLERQRSELEDKVKSLAQLQESQLKNSHVEKEQAQQILTEKENVILQMREEQAKEIEILKQKLFSKEESISILHEEYETKFKNQEKRMEKIKQKAKEMQEMKKKLLDQEAKLKKELENTVLELSQKEKQFNAKILEMAQANSAGISDTVSRLEENQRQQIESLTGAHQRELDDLIESWEKKLSQQAEELRDQHEKLIEEKEQELGELKQKVLTVQSEKEEVTQEVARLTEAVTGQDVTLAGLQGQLEQKSAAVLALSDSHAQLQSQVEKLEVDLGCALNEKLSLQEELAELKMLAEREKLRVSELTGKVQAAEEELQSCKSLHEVSRKSLEDKSLNLRTLLEELASQLDRHCERTKALLEAKTNELVCTSRDKADAILARLSRCQRHTATVGEALLRRMGQVSELEAQLTQLTEEQCTLKNSFQQVTNQLEEKENQIKTMKADMEGLIAEKEALQQEGGQQQQVASEKESCITQLKKELSENINAVTLLREELSEKKSEIASLSKQLSDVSAQLENSISPSDKAEAISALSKQHEEQELQLQAQLRELSSKVDALSKEKMSALEQVDHWSNKFSEWKKKAQPRFAQYQSTIKDLQTQLDLKAKEAGEKDEQIRLLKEDLDQQNERFESLKGEMEKKECDLETELKTRTARVVELEDCITQRKKEVESLNEALRNCSQQRDTEHSGLVQTLQRLEELGQEKDNKVREAEETVLGLRERVSSLEAELRVVRKELDDVNSSVKSRDGELKALEDKLELESAAKVELKRKAEQKLAAIRKQLLSQMEAKVQQCAKDTESQLSELRAKLQGREKQIHILEGKLKNLASSPHPERAVVSGSMGNVAASPEQEAADSQECTQKACKERVCVLQRSVIEKERLTQRLQQGEREAAPSQSEVRHRELSVKLDRARAKQLEDQVLIGCLQEELEERMKCPSILSQPMGEETGKNNTGLKQNWASMVDTVQKTLQEKELSCQALERRVRELESDLITERDAHRLEVEKLTLKYEKSQSPQQEMGGKNTSVEILEDRPEENSKSHVIESKLGTPMDGRHSDLESKLAGSEREKQKLSKEVGRLQKDLRALRKEHQQELDILRKECEQEAEEKLKQEQEDLELKHSSTLKQLMREFNTQLAQKEQELERTVQETIDKAQEVEAELLQSHQEETQQLHRKIAEKEDDLQRTARRYEEILDAREEEMTAKVMDLQTRLEELQKKYEHRLEQEESAKDSVTVLELQTQLAQKTTLISDSKLKEQELREQVHNLEDRLKSYEKSVCAAAVGAPYRGGNLYHTEVSLFGEPTEFEYLRKVLFEYMMGRETKTMAKVITTVLRFPDDQAQKILEREDARLMSWLRTSS.

Positions 1–54 (MFKKLKQKISEEQQQLQQALAPAQASSSSSTPTRTRSRTSSFTDQLDDATPNRE) are disordered. Position 10 is a phosphoserine (S10). The span at 12–41 (EQQQLQQALAPAQASSSSSTPTRTRSRTSS) shows a compositional bias: low complexity. The residue at position 39 (T39) is a Phosphothreonine. Residues S41, S104, and S111 each carry the phosphoserine modification. The interaction with MACF1 stretch occupies residues 165 to 235 (SLSREQLLQR…EELQMDQQAK (71 aa)). The stretch at 167 to 2182 (SREQLLQRLR…SYEKSVCAAA (2016 aa)) forms a coiled coil. Basic and acidic residues-rich tracts occupy residues 1932-1946 (LEDR…HVIE) and 1954-1977 (DGRH…LSKE). The disordered stretch occupies residues 1932–1977 (LEDRPEENSKSHVIESKLGTPMDGRHSDLESKLAGSEREKQKLSKE). In terms of domain architecture, GRIP spans 2199–2246 (LFGEPTEFEYLRKVLFEYMMGRETKTMAKVITTVLRFPDDQAQKILER).

Homodimer. Interacts with GTP-bound ARL1 and ARL3. Interacts with MACF1. Directly interacts with TBC1D23. Interacts with FAM91A1; this interaction may be mediated by TBC1D23. Expressed in the head of epididymal sperm but not in testicular sperm (at protein level).

The protein resides in the cytoplasm. The protein localises to the golgi apparatus membrane. It localises to the golgi apparatus. It is found in the trans-Golgi network membrane. In terms of biological role, involved in vesicular trafficking at the Golgi apparatus level. May play a role in delivery of transport vesicles containing GPI-linked proteins from the trans-Golgi network through its interaction with MACF1. Involved in endosome-to-Golgi trafficking. The protein is Golgin subfamily A member 4 of Rattus norvegicus (Rat).